Here is a 147-residue protein sequence, read N- to C-terminus: Prefoldin subunit alpha (147 aa).

The protein belongs to the prefoldin alpha subunit family. As to quaternary structure, heterohexamer of two alpha and four beta subunits.

The protein localises to the cytoplasm. Molecular chaperone capable of stabilizing a range of proteins. Seems to fulfill an ATP-independent, HSP70-like function in archaeal de novo protein folding. This chain is Prefoldin subunit alpha, found in Saccharolobus islandicus (strain Y.N.15.51 / Yellowstone #2) (Sulfolobus islandicus).